The following is a 599-amino-acid chain: Elongation factor 4 (599 aa).

Positions 2-184 constitute a tr-type G domain; it reads KNIRNFSIIA…RLVRDIPPPE (183 aa). GTP contacts are provided by residues 14–19 and 131–134; these read DHGKST and NKID.

This sequence belongs to the TRAFAC class translation factor GTPase superfamily. Classic translation factor GTPase family. LepA subfamily.

It is found in the cell inner membrane. The catalysed reaction is GTP + H2O = GDP + phosphate + H(+). In terms of biological role, required for accurate and efficient protein synthesis under certain stress conditions. May act as a fidelity factor of the translation reaction, by catalyzing a one-codon backward translocation of tRNAs on improperly translocated ribosomes. Back-translocation proceeds from a post-translocation (POST) complex to a pre-translocation (PRE) complex, thus giving elongation factor G a second chance to translocate the tRNAs correctly. Binds to ribosomes in a GTP-dependent manner. The chain is Elongation factor 4 from Klebsiella pneumoniae (strain 342).